The following is a 277-amino-acid chain: MIOREX complex component 2 (277 aa).

The protein belongs to the NAD(P)-dependent epimerase/dehydratase family. As to quaternary structure, associates with the mitochondrial ribosome. Component of a multi-subunit COQ enzyme complex.

The protein localises to the mitochondrion. The protein operates within cofactor biosynthesis; ubiquinone biosynthesis. Component of MIOREX complexes, large expressome-like assemblies of ribosomes with factors involved in all the steps of post-transcriptional gene expression. Component of a multi-subunit COQ enzyme complex required for coenzyme Q biosynthesis. This is MIOREX complex component 2 from Saccharomyces cerevisiae (strain ATCC 204508 / S288c) (Baker's yeast).